Here is a 63-residue protein sequence, read N- to C-terminus: Large ribosomal subunit protein bL32 (63 aa).

Residues 1–18 (MAHPKRRISRSRRDKRRA) are compositionally biased toward basic residues. Positions 1–27 (MAHPKRRISRSRRDKRRAQYNAKTKAP) are disordered.

It belongs to the bacterial ribosomal protein bL32 family.

The chain is Large ribosomal subunit protein bL32 from Chloroherpeton thalassium (strain ATCC 35110 / GB-78).